The primary structure comprises 345 residues: Anthranilate phosphoribosyltransferase (345 aa).

5-phospho-alpha-D-ribose 1-diphosphate-binding positions include Gly86, 89–90 (GD), Thr94, 96–99 (NIST), 114–122 (KHGNRNLSS), and Ala126. Residue Gly86 participates in anthranilate binding. Ser98 serves as a coordination point for Mg(2+). Asn117 contributes to the anthranilate binding site. Arg172 provides a ligand contact to anthranilate. 2 residues coordinate Mg(2+): Asp231 and Glu232.

Belongs to the anthranilate phosphoribosyltransferase family. As to quaternary structure, homodimer. It depends on Mg(2+) as a cofactor.

It catalyses the reaction N-(5-phospho-beta-D-ribosyl)anthranilate + diphosphate = 5-phospho-alpha-D-ribose 1-diphosphate + anthranilate. The protein operates within amino-acid biosynthesis; L-tryptophan biosynthesis; L-tryptophan from chorismate: step 2/5. Catalyzes the transfer of the phosphoribosyl group of 5-phosphorylribose-1-pyrophosphate (PRPP) to anthranilate to yield N-(5'-phosphoribosyl)-anthranilate (PRA). The sequence is that of Anthranilate phosphoribosyltransferase from Jannaschia sp. (strain CCS1).